We begin with the raw amino-acid sequence, 1020 residues long: RNA-binding protein 44 (1020 aa).

Disordered stretches follow at residues 1 to 23 (MQAT…GHLQ) and 50 to 70 (DGEG…NSSV). A compositionally biased stretch (basic and acidic residues) spans 58–70 (TDERTNVKENSSV). A phosphoserine mark is found at Ser-249, Ser-371, Ser-374, Ser-516, Ser-683, and Ser-690. The RRM domain maps to 796-870 (FLIHVGGLCP…KSVNVRLVKI (75 aa)).

As to quaternary structure, homodimer. Interacts with TEX14.

The protein resides in the cytoplasm. Functionally, component of intercellular bridges during meiosis. Intercellular bridges are evolutionarily conserved structures that connect differentiating germ cells. Not required for fertility. This chain is RNA-binding protein 44 (Rbm44), found in Rattus norvegicus (Rat).